The following is a 644-amino-acid chain: Fidgetin-like protein 2 (644 aa).

2 disordered regions span residues methionine 1–proline 36 and alanine 285–glycine 323. Residues proline 10–serine 27 are compositionally biased toward polar residues. Over residues alanine 285–alanine 294 the composition is skewed to low complexity. ATP contacts are provided by residues alanine 390 and glycine 430 to leucine 435.

Belongs to the AAA ATPase family. Mg(2+) is required as a cofactor.

It localises to the cytoplasm. The protein resides in the cell cortex. The enzyme catalyses ATP + H2O = ADP + phosphate + H(+). Functionally, microtubule-severing enzyme that negatively regulates cell migration and wound healing. In migrating cells, targets dynamic microtubules (MTs) at the leading edge and severs them, thereby suppressing motility. Microtubule severing releases ARHGEF2 which activates RHOA, which in turn regulates focal ahesion turnover via focal adhesion kinase, as opposed to F-actin polymerization, to suppress cell motility. Negative regulator of axon regeneration that suppresses axonal growth by selectively severing dynamic MTs in the distal axon shaft and growth cone. Contributes to proper cell branching during endothelial and neuronal development. The protein is Fidgetin-like protein 2 (Fignl2) of Mus musculus (Mouse).